Here is a 199-residue protein sequence, read N- to C-terminus: MSYSGFRVMADSTPTLKKRLSGRSLYLVGMMGSGKTSTGRPLAERLGYGFVDADAVIEQAAGCSIPEIFERDGDAGFRSLESQVLSAISQRHSLVVATGGGVVTQPENWGLLHSGIVIWLDVVPDQLLQRLNADSTVRPLLQTTDPEASLNALLNERRPLYSEADLTVVINDETPEAVADGILQLLPSLLQDPTQRRTD.

An ATP-binding site is contributed by 32-37 (GSGKTS). T36 serves as a coordination point for Mg(2+). Residues D54, R78, and G100 each contribute to the substrate site. R138 serves as a coordination point for ATP. R157 is a binding site for substrate.

Belongs to the shikimate kinase family. Monomer. Requires Mg(2+) as cofactor.

The protein localises to the cytoplasm. The enzyme catalyses shikimate + ATP = 3-phosphoshikimate + ADP + H(+). Its pathway is metabolic intermediate biosynthesis; chorismate biosynthesis; chorismate from D-erythrose 4-phosphate and phosphoenolpyruvate: step 5/7. Its function is as follows. Catalyzes the specific phosphorylation of the 3-hydroxyl group of shikimic acid using ATP as a cosubstrate. The protein is Shikimate kinase of Synechococcus sp. (strain CC9605).